Here is a 365-residue protein sequence, read N- to C-terminus: MFETNPILSKLKEIRERANLLRGYLDYDVKAERLVEVSRELELPDVWNEPERAQALGKERSSLEEVVNTIVELETGCEDIEGLVELAVEESDQETFDDAEVEADALDKVLEKLEFRRMFSGEQDANNSYLDIQSGSGGTEAQDWAEMLMRMYLRWGEAHGYKTEVIEVTDGDVAGIKGCTIKYTGEYAYGWLRTETGVHRLVRKSPFDSSGRRHTSFASAFIYPEIDDNIEIDINPADLRIDTFRASGAGGQHVNKTDSAIRITHEPTGAVVACQADRSQHKNRATAMKLLKAKLYEMEMQKQNSDKQVLEDGKSDIGWGSQIRSYVLDDSRIKDLRTGVENRNTQAVLDGDLDKFLEASLKSGL.

The residue at position 252 (Gln252) is an N5-methylglutamine.

This sequence belongs to the prokaryotic/mitochondrial release factor family. In terms of processing, methylated by PrmC. Methylation increases the termination efficiency of RF2.

The protein localises to the cytoplasm. Peptide chain release factor 2 directs the termination of translation in response to the peptide chain termination codons UGA and UAA. The protein is Peptide chain release factor 2 of Colwellia psychrerythraea (strain 34H / ATCC BAA-681) (Vibrio psychroerythus).